Consider the following 456-residue polypeptide: Probable glycine dehydrogenase (decarboxylating) subunit 1 (456 aa).

This sequence belongs to the GcvP family. N-terminal subunit subfamily. The glycine cleavage system is composed of four proteins: P, T, L and H. In this organism, the P 'protein' is a heterodimer of two subunits.

It carries out the reaction N(6)-[(R)-lipoyl]-L-lysyl-[glycine-cleavage complex H protein] + glycine + H(+) = N(6)-[(R)-S(8)-aminomethyldihydrolipoyl]-L-lysyl-[glycine-cleavage complex H protein] + CO2. Its function is as follows. The glycine cleavage system catalyzes the degradation of glycine. The P protein binds the alpha-amino group of glycine through its pyridoxal phosphate cofactor; CO(2) is released and the remaining methylamine moiety is then transferred to the lipoamide cofactor of the H protein. The chain is Probable glycine dehydrogenase (decarboxylating) subunit 1 from Legionella pneumophila subsp. pneumophila (strain Philadelphia 1 / ATCC 33152 / DSM 7513).